The chain runs to 987 residues: Pro-apoptotic serine protease NMA111 (987 aa).

Residues 1-29 (MPDIPTKRRLSNGSVIDNTNKRQMQSSFV) are disordered. Polar residues predominate over residues 11–28 (SNGSVIDNTNKRQMQSSF). Residues 69-262 (VKSVVSIQFT…LPVYRPLRAL (194 aa)) form a serine protease region. Residues His110, Asp141, and Ser224 each act as charge relay system in the active site. PDZ domains are found at residues 279–364 (EWSL…VVIQ) and 878–950 (PHHG…VSFD).

This sequence belongs to the peptidase S1C family.

It is found in the nucleus. Its function is as follows. Nuclear serine protease which mediates apoptosis. This chain is Pro-apoptotic serine protease NMA111 (NMA111), found in Debaryomyces hansenii (strain ATCC 36239 / CBS 767 / BCRC 21394 / JCM 1990 / NBRC 0083 / IGC 2968) (Yeast).